Reading from the N-terminus, the 467-residue chain is MSKFPTVSEILSGKIVVGEKVTVRGWVRTRRDSKAGLSFLTVYDGSCFEPIQVIINNDLANYQTEILRLTAGCSVIVTGNIVESPASGQAVELQALEVEVVGWVDDPDTYPMAAKRHSIEYLREVAHLRPRTNLIGAVARVRHCLAQAIHRFFNGQGFYWVATPLITASDTEGAGEMFRVSTLDLENLPRTEHGKIDYSQDFFGKEAFLTVSGQLNGESYACALSKVYTFGPTFRAENSNTTRHLAEFWMVEPEFAFATLADNAKLAEDMLKYVFKAVLEERKDDMQFFAKHIDKEVITRLENFIAAPFAQVDYSDAIEILLKSGKKFEFPVAWGVDLSSEHERFLAEEHFKSPVVVKNYPKDIKAFYMRLNDDGKTVAAMDVLAPGIGEIIGGSQREERLAVLDSRMIEMGLNPEDYWWYRDLRKYGTVPHAGFGLGFERLIVYVTGLQNIREVIPFPRAPRNANF.

It belongs to the class-II aminoacyl-tRNA synthetase family. As to quaternary structure, homodimer.

It is found in the cytoplasm. The enzyme catalyses tRNA(Asn) + L-asparagine + ATP = L-asparaginyl-tRNA(Asn) + AMP + diphosphate + H(+). In Haemophilus ducreyi (strain 35000HP / ATCC 700724), this protein is Asparagine--tRNA ligase.